The following is a 196-amino-acid chain: Imidazoleglycerol-phosphate dehydratase (196 aa).

Belongs to the imidazoleglycerol-phosphate dehydratase family.

It localises to the cytoplasm. It carries out the reaction D-erythro-1-(imidazol-4-yl)glycerol 3-phosphate = 3-(imidazol-4-yl)-2-oxopropyl phosphate + H2O. Its pathway is amino-acid biosynthesis; L-histidine biosynthesis; L-histidine from 5-phospho-alpha-D-ribose 1-diphosphate: step 6/9. The polypeptide is Imidazoleglycerol-phosphate dehydratase (Halobacterium salinarum (strain ATCC 700922 / JCM 11081 / NRC-1) (Halobacterium halobium)).